An 839-amino-acid polypeptide reads, in one-letter code: Taste receptor type 1 member 2 (839 aa).

The first 19 residues, 1–19 (MGPRATTICSLFFLLWVLA), serve as a signal peptide directing secretion. At 20 to 566 (EPAENSDFYL…AFLEWHEAPT (547 aa)) the chain is on the extracellular side. Asn-84, Asn-248, Asn-292, Asn-312, Asn-368, Asn-428, Asn-487, and Asn-527 each carry an N-linked (GlcNAc...) asparagine glycan. Residues 567-587 (IAVALLAALGFLSTLAILVIF) form a helical membrane-spanning segment. Over 588–602 (WRHFQTPMVRSAGGP) the chain is Cytoplasmic. A helical membrane pass occupies residues 603–623 (MCFLMLTLLLVAYMVVPVYVG). Over 624–635 (PPKVSTCLCRQA) the chain is Extracellular. The helical transmembrane segment at 636–656 (LFPLCFTICISCIAVRSFQII) threads the bilayer. Over 657 to 681 (CAFKMASRFPRAYSYWVRYQGPYVS) the chain is Cytoplasmic. A helical membrane pass occupies residues 682–702 (MAFITVLKMVIVVIGMLATGL). The Extracellular segment spans residues 703 to 727 (NPTTRTDPDDPKIMIVSCNPNYRNS). The chain crosses the membrane as a helical span at residues 728–748 (LLFNTSLDLLLSVVGFSFANM). Over 749-760 (GKELPTNYNEAK) the chain is Cytoplasmic. A helical transmembrane segment spans residues 761–781 (FITLSMTFYFTSSISLCTFMS). Residues 782–784 (AYS) lie on the Extracellular side of the membrane. The helical transmembrane segment at 785–805 (GVLVTIVDLLVTVLNLLAISL) threads the bilayer. Topologically, residues 806-839 (GYFGPKCYMILFYPERNTPAYFNSVIQGYTMTRD) are cytoplasmic.

Belongs to the G-protein coupled receptor 3 family. TAS1R subfamily. Forms heterodimers with TAS1R3.

The protein resides in the cell membrane. Functionally, putative taste receptor. TAS1R2/TAS1R3 recognizes diverse natural and synthetic sweeteners. The polypeptide is Taste receptor type 1 member 2 (TAS1R2) (Pongo pygmaeus (Bornean orangutan)).